Consider the following 484-residue polypeptide: Threonine synthase-like 2 (484 aa).

Position 113 is an N6-(pyridoxal phosphate)lysine (K113).

This sequence belongs to the threonine synthase family. Pyridoxal 5'-phosphate serves as cofactor.

In terms of biological role, acts as a catabolic phospho-lyase on both gamma- and beta-phosphorylated substrates. Degrades O-phospho-threonine (PThr) to alpha-ketobutyrate, ammonia and phosphate. This is Threonine synthase-like 2 (THNSL2) from Pongo abelii (Sumatran orangutan).